A 379-amino-acid chain; its full sequence is Putative cysteine desulfurase IscS 1 (379 aa).

Pyridoxal 5'-phosphate is bound by residues 71 to 72 (GT), asparagine 151, glutamine 179, and 199 to 201 (SGH). Lysine 202 is modified (N6-(pyridoxal phosphate)lysine). A pyridoxal 5'-phosphate-binding site is contributed by threonine 237. The Cysteine persulfide intermediate role is filled by cysteine 325. Cysteine 325 contacts [2Fe-2S] cluster.

The protein belongs to the class-V pyridoxal-phosphate-dependent aminotransferase family. NifS/IscS subfamily. The cofactor is pyridoxal 5'-phosphate.

The enzyme catalyses (sulfur carrier)-H + L-cysteine = (sulfur carrier)-SH + L-alanine. Its function is as follows. Catalyzes the removal of elemental sulfur from cysteine to produce alanine. In Bacillus subtilis (strain 168), this protein is Putative cysteine desulfurase IscS 1 (iscS1).